A 160-amino-acid chain; its full sequence is pH-gated potassium channel KcsA (160 aa).

The Cytoplasmic segment spans residues 1 to 27; that stretch reads MPPMLSGLLARLVKLLLGRHGSALHWR. Residues 28–50 form a helical membrane-spanning segment; that stretch reads AAGAATVLLVIVLLAGSYLAVLA. Residues 51 to 61 lie on the Extracellular side of the membrane; it reads ERGAPGAQLIT. Residues 62 to 72 constitute an intramembrane region (helical; Pore-forming); the sequence is YPRALWWSVET. The segment at residues 73–80 is an intramembrane region (pore-forming); the sequence is ATTVGYGD. The Selectivity filter motif lies at 75–80; sequence TVGYGD. The Extracellular portion of the chain corresponds to 81–87; sequence LYPVTLW. A helical transmembrane segment spans residues 88–111; sequence GRLVAVVVMVAGITSFGLVTAALA. The Cytoplasmic portion of the chain corresponds to 112 to 160; it reads TWFVGREQERRGHFVRHSEKAAEEAYTRTTRALHERFDRLERMLDDNRR.

Belongs to the potassium channel family. As to quaternary structure, homotetramer.

It localises to the cell membrane. Its function is as follows. Acts as a pH-gated potassium ion channel; changing the cytosolic pH from 7 to 4 opens the channel. The chain is pH-gated potassium channel KcsA (kcsA) from Streptomyces coelicolor (strain ATCC BAA-471 / A3(2) / M145).